The chain runs to 393 residues: S-adenosylmethionine synthase (393 aa).

His-16 contributes to the ATP binding site. Asp-18 contacts Mg(2+). Glu-44 serves as a coordination point for K(+). Residues Glu-57 and Gln-100 each contribute to the L-methionine site. Residues 100-110 (QSQDIAQGVDK) form a flexible loop region. ATP is bound by residues 167-169 (DAK), 238-239 (RF), Asp-247, 253-254 (RK), Ala-270, and Lys-274. Asp-247 is a binding site for L-methionine. Lys-278 is an L-methionine binding site.

This sequence belongs to the AdoMet synthase family. In terms of assembly, homotetramer; dimer of dimers. The cofactor is Mg(2+). Requires K(+) as cofactor.

The protein resides in the cytoplasm. The catalysed reaction is L-methionine + ATP + H2O = S-adenosyl-L-methionine + phosphate + diphosphate. Its pathway is amino-acid biosynthesis; S-adenosyl-L-methionine biosynthesis; S-adenosyl-L-methionine from L-methionine: step 1/1. Catalyzes the formation of S-adenosylmethionine (AdoMet) from methionine and ATP. The overall synthetic reaction is composed of two sequential steps, AdoMet formation and the subsequent tripolyphosphate hydrolysis which occurs prior to release of AdoMet from the enzyme. This is S-adenosylmethionine synthase from Delftia acidovorans (strain DSM 14801 / SPH-1).